The chain runs to 75 residues: Sec-independent protein translocase protein TatA (75 aa).

Residues 1–21 traverse the membrane as a helical segment; sequence MGSFSIWHWLVVLAIVLLVFG. A disordered region spans residues 41-75; it reads KGMRDEDKPNAQLGDESRTQDASRTAQDEHDRNAR.

The protein belongs to the TatA/E family. In terms of assembly, the Tat system comprises two distinct complexes: a TatABC complex, containing multiple copies of TatA, TatB and TatC subunits, and a separate TatA complex, containing only TatA subunits. Substrates initially bind to the TatABC complex, which probably triggers association of the separate TatA complex to form the active translocon.

Its subcellular location is the cell inner membrane. In terms of biological role, part of the twin-arginine translocation (Tat) system that transports large folded proteins containing a characteristic twin-arginine motif in their signal peptide across membranes. TatA could form the protein-conducting channel of the Tat system. The polypeptide is Sec-independent protein translocase protein TatA (Stenotrophomonas maltophilia (strain K279a)).